The following is a 441-amino-acid chain: Serine carboxypeptidase-like 2 (441 aa).

An N-terminal signal peptide occupies residues 1–29 (MANKYFSSVLKSLLLLLHLVFLSKQHVDS). Intrachain disulfides connect cysteine 88-cysteine 331, cysteine 252-cysteine 266, and cysteine 290-cysteine 297. A glycan (N-linked (GlcNAc...) asparagine) is linked at asparagine 109. The active site involves serine 184. A glycan (N-linked (GlcNAc...) asparagine) is linked at asparagine 350. The active site involves aspartate 366. A glycan (N-linked (GlcNAc...) asparagine) is linked at asparagine 382. Histidine 419 is an active-site residue.

This sequence belongs to the peptidase S10 family. As to expression, expressed in seedlings and roots.

The protein resides in the secreted. Its function is as follows. Probable carboxypeptidase. The protein is Serine carboxypeptidase-like 2 (SCPL2) of Arabidopsis thaliana (Mouse-ear cress).